The primary structure comprises 346 residues: Serpentine receptor class gamma-20 (346 aa).

The next 7 helical transmembrane spans lie at 27–47 (VMLSILEYLVQATYLSVSAVL), 69–89 (FFVLYAAEAVMNVYSCVIEVL), 106–128 (PFFFTPSILTKLYFLLNHYCLAF), 157–177 (ILAPVLVSLFVLPLGVTWNIL), 212–232 (IPCLFLMIVFFLASIFGLTML), 254–274 (TMLFAIAQIYFAFLAGYLPGI), and 279–299 (LLISFNVFDVLYVYSPIALIL).

This sequence belongs to the nematode receptor-like protein srg family.

The protein localises to the membrane. This Caenorhabditis elegans protein is Serpentine receptor class gamma-20 (srg-20).